Here is a 290-residue protein sequence, read N- to C-terminus: ATP synthase gamma chain (290 aa).

Belongs to the ATPase gamma chain family. F-type ATPases have 2 components, CF(1) - the catalytic core - and CF(0) - the membrane proton channel. CF(1) has five subunits: alpha(3), beta(3), gamma(1), delta(1), epsilon(1). CF(0) has three main subunits: a, b and c.

It localises to the cell membrane. Its function is as follows. Produces ATP from ADP in the presence of a proton gradient across the membrane. The gamma chain is believed to be important in regulating ATPase activity and the flow of protons through the CF(0) complex. The sequence is that of ATP synthase gamma chain from Roseiflexus sp. (strain RS-1).